The sequence spans 138 residues: uncharacterized protein (138 aa).

Positions 1-37 (MNSTFTSQPLLNRSEPRVFKEFYRLVIGCNPAWQVMA) are cleaved as a signal peptide.

It to H.influenzae HI_1631.

This is an uncharacterized protein from Sinorhizobium fredii (strain NBRC 101917 / NGR234).